A 540-amino-acid polypeptide reads, in one-letter code: 2,3-bisphosphoglycerate-independent phosphoglycerate mutase (540 aa).

Mn(2+) contacts are provided by D24 and S74. Catalysis depends on S74, which acts as the Phosphoserine intermediate. Substrate-binding positions include H135, 165–166 (RD), R197, R203, 268–271 (RPDR), and K341. Mn(2+) contacts are provided by D408, H412, D449, H450, and H467.

The protein belongs to the BPG-independent phosphoglycerate mutase family. Monomer. The cofactor is Mn(2+).

It carries out the reaction (2R)-2-phosphoglycerate = (2R)-3-phosphoglycerate. It functions in the pathway carbohydrate degradation; glycolysis; pyruvate from D-glyceraldehyde 3-phosphate: step 3/5. Catalyzes the interconversion of 2-phosphoglycerate and 3-phosphoglycerate. This Prochlorococcus marinus (strain MIT 9313) protein is 2,3-bisphosphoglycerate-independent phosphoglycerate mutase.